The following is an 814-amino-acid chain: DNA ligase (814 aa).

NAD(+)-binding positions include 46 to 50, 95 to 96, and glutamate 129; these read DAEYD and SL. Lysine 131 serves as the catalytic N6-AMP-lysine intermediate. Residues arginine 152, glutamate 189, lysine 305, and lysine 329 each contribute to the NAD(+) site. Residues cysteine 434, cysteine 437, cysteine 458, and cysteine 464 each coordinate Zn(2+). The tract at residues 526–549 is disordered; sequence SAQRRTEGEPAPKKPTKKKGEEED. The BRCT domain maps to 735 to 814; it reads TSAAAFAGKT…DDWLAMLAEA (80 aa).

It belongs to the NAD-dependent DNA ligase family. LigA subfamily. Mg(2+) is required as a cofactor. Mn(2+) serves as cofactor.

It catalyses the reaction NAD(+) + (deoxyribonucleotide)n-3'-hydroxyl + 5'-phospho-(deoxyribonucleotide)m = (deoxyribonucleotide)n+m + AMP + beta-nicotinamide D-nucleotide.. Functionally, DNA ligase that catalyzes the formation of phosphodiester linkages between 5'-phosphoryl and 3'-hydroxyl groups in double-stranded DNA using NAD as a coenzyme and as the energy source for the reaction. It is essential for DNA replication and repair of damaged DNA. The sequence is that of DNA ligase from Methylorubrum extorquens (strain CM4 / NCIMB 13688) (Methylobacterium extorquens).